Consider the following 341-residue polypeptide: Mediator of RNA polymerase II transcription subunit 18 (341 aa).

The tract at residues 139–216 (KVMDKEKVQS…KEHSEGNASQ (78 aa)) is disordered. The segment covering 163 to 211 (EDKKENIKKEESGEEVKGSGEEVKGSGEEVKGSGEEAKKSGEEAKEHSE) has biased composition (basic and acidic residues).

Belongs to the Mediator complex subunit 18 family. Component of the Mediator complex.

Its subcellular location is the nucleus. In terms of biological role, component of the Mediator complex, a coactivator involved in the regulated transcription of nearly all RNA polymerase II-dependent genes. Mediator functions as a bridge to convey information from gene-specific regulatory proteins to the basal RNA polymerase II transcription machinery. Mediator is recruited to promoters by direct interactions with regulatory proteins and serves as a scaffold for the assembly of a functional preinitiation complex with RNA polymerase II and the general transcription factors. This is Mediator of RNA polymerase II transcription subunit 18 (SRB5) from Debaryomyces hansenii (strain ATCC 36239 / CBS 767 / BCRC 21394 / JCM 1990 / NBRC 0083 / IGC 2968) (Yeast).